The following is a 153-amino-acid chain: Mitochondrial import inner membrane translocase subunit TIM14 (153 aa).

At 1-43 the chain is on the mitochondrial intermembrane side; it reads MDGTGISDGSSVTGDAAAGFPAGATQAPGSKQGMDLYFDNALQ. A helical membrane pass occupies residues 44-66; the sequence is YMGEHPVLAGVGGFLALYVGAGV. At 67-153 the chain is on the mitochondrial matrix side; the sequence is YKGVQTRLNG…FLEKKGIVRK (87 aa). The 58-residue stretch at 96 to 153 folds into the J domain; that stretch reads EALQILNLKENNLTTKKLKEVHRKIMLANHPDKGGSPYLATKINEAKDFLEKKGIVRK.

It belongs to the TIM14 family. Heterodimer with PAM16. Component of the PAM complex, at least composed of mtHsp70, MGE1, TIM44, PAM16, PAM17 and PAM18.

The protein resides in the mitochondrion inner membrane. Functionally, essential component of the PAM complex, a complex required for the translocation of transit peptide-containing proteins from the inner membrane into the mitochondrial matrix in an ATP-dependent manner. In the complex, it is required to stimulate activity of mtHSP70 (SSC1). The chain is Mitochondrial import inner membrane translocase subunit TIM14 (PAM18) from Candida glabrata (strain ATCC 2001 / BCRC 20586 / JCM 3761 / NBRC 0622 / NRRL Y-65 / CBS 138) (Yeast).